A 103-amino-acid polypeptide reads, in one-letter code: Small ribosomal subunit protein uS10 (103 aa).

This sequence belongs to the universal ribosomal protein uS10 family. As to quaternary structure, part of the 30S ribosomal subunit.

In terms of biological role, involved in the binding of tRNA to the ribosomes. The chain is Small ribosomal subunit protein uS10 from Shewanella halifaxensis (strain HAW-EB4).